Here is a 302-residue protein sequence, read N- to C-terminus: Glycine--tRNA ligase alpha subunit (302 aa).

This sequence belongs to the class-II aminoacyl-tRNA synthetase family. Tetramer of two alpha and two beta subunits.

The protein resides in the cytoplasm. The catalysed reaction is tRNA(Gly) + glycine + ATP = glycyl-tRNA(Gly) + AMP + diphosphate. The sequence is that of Glycine--tRNA ligase alpha subunit from Psychromonas ingrahamii (strain DSM 17664 / CCUG 51855 / 37).